An 886-amino-acid chain; its full sequence is MAEVNVEKLAGDIGTTVDKLLQQFSQAGITKQAGESVTEAEKATLLDHLSKQHGGTGSDGPARMTLQRKSKSTLSVTGSTGKAKSVQVEVRKTRTYVKKSAMEQEQEELRLAAEEKLRLEEQQKAAQEAAELKAKQEAERKAKEDADRKAKEEAKRKADAERKAKQKQMTPEQSAKSEKDRIEAERLQKEAEEAALKKAEEEAKRQAEEARKLAEENSARWKKEEEERKKREETSDHHLTTSTYAREAEDVADARDEQGTRRAKKKKKAPAKDKFAASKGRNKGKLKAPTSLQHGFTKPTADVKNEVRISETITVAELASRMAVKGAEVVKTMMKMGDMVTINQVIDQEAAQLVAEEMGHKVIIVKENELEQKVLNDRHEDGKSEPRAPVVTVMGHVDHGKTSTLDYIRSAKVASGEAGGITQHIGAYHVDVNGNMITFLDTPGHAAFTSMRARGAQATDIVILVVAADDGVMPQTKEAVQHARAAGVPLIIAVNKMDKEGVDPDRVKNELAQLDVIPEEWGGDTQYVHISAKTGLGIDELLEAVLNQSELLELTAPTVGMAAGVVIESRLDKGRGPVASILVQSGTLNQGDIVLCGLEYGRIRAMRDENGKDIKSAGPSIPVEILGLSGIPAAGDEATVVKDERKAREVALYRQGKFRDVKLARQQKAKLENMFSHMTEGDVSEVNVVLKADVQGSIEAISDSLTKLSTDEVKVKIVGSGVGGITETDATLAAASNAIVVGFNVRADASARKVIESENLDLRYYSVIYSLIDEVKQAMSGMLAPEFKQEIIGLAQVRDVFKSPKIGAIAGCMVTEGVIKRSAPIRVLRDNVVIYEGELESLRRFKDDVADVRNGMECGIGVKNYNDVRVGDQIEVFETVEIQRTL.

Disordered regions lie at residues 46-91 (LDHL…VEVR) and 121-297 (EQQK…HGFT). Over residues 72 to 82 (STLSVTGSTGK) the composition is skewed to polar residues. Composition is skewed to basic and acidic residues over residues 130 to 163 (AELK…AERK), 175 to 239 (AKSE…DHHL), and 246 to 260 (REAE…EQGT). The tr-type G domain occupies 386-555 (PRAPVVTVMG…LNQSELLELT (170 aa)). Residues 395–402 (GHVDHGKT) are G1. 395-402 (GHVDHGKT) is a GTP binding site. Residues 420–424 (GITQH) form a G2 region. A G3 region spans residues 441-444 (DTPG). Residues 441–445 (DTPGH) and 495–498 (NKMD) each bind GTP. The tract at residues 495 to 498 (NKMD) is G4. Positions 531 to 533 (SAK) are G5.

This sequence belongs to the TRAFAC class translation factor GTPase superfamily. Classic translation factor GTPase family. IF-2 subfamily.

It is found in the cytoplasm. Its function is as follows. One of the essential components for the initiation of protein synthesis. Protects formylmethionyl-tRNA from spontaneous hydrolysis and promotes its binding to the 30S ribosomal subunits. Also involved in the hydrolysis of GTP during the formation of the 70S ribosomal complex. The protein is Translation initiation factor IF-2 of Pseudoalteromonas translucida (strain TAC 125).